A 343-amino-acid chain; its full sequence is Thromboxane A2 receptor (343 aa).

Topologically, residues 1-29 (MWPNGSSLGPCFRPTNITLEERRLIASPW) are extracellular. Residues Asn4 and Asn16 are each glycosylated (N-linked (GlcNAc...) asparagine). A helical transmembrane segment spans residues 30–52 (FAASFCVVGLASNLLALSVLAGA). Over 53-66 (RQGGSHTRSSFLTF) the chain is Cytoplasmic. A helical transmembrane segment spans residues 67 to 87 (LCGLVLTDFLGLLVTGAIVVS). Residues 88–106 (QHAALFEWHAVDPGCRLCR) lie on the Extracellular side of the membrane. Cys105 and Cys183 are joined by a disulfide. A helical transmembrane segment spans residues 107–128 (FMGVVMIFFGLSPLLLGATMAS). The Cytoplasmic portion of the chain corresponds to 129–149 (ERFLGITRPFSRPVVTSQRRA). Residues 150 to 172 (WATVGLVWAAALALGLLPLLGLG) form a helical membrane-spanning segment. The Extracellular segment spans residues 173-193 (RYTVQYPGSWCFLTLGAESGD). A helical transmembrane segment spans residues 194 to 219 (VAFGLLFSMLGGLSVGLSFLLNTVSV). At 220 to 246 (ATLCHVYHGQEAAQQRPRDSEVEMMAQ) the chain is on the cytoplasmic side. The helical transmembrane segment at 247–270 (LLGIMLVASVCWLPLLVFIAQTVL) threads the bilayer. The Extracellular segment spans residues 271–289 (RNPPAMSPSGQLSRATEQE). Residues 290–311 (LLIYLRVATWNQILDPWVYILF) form a helical membrane-spanning segment. At 312-343 (RRAVLRRLQPRLSTRPRSLSLQPQLTQRSGLQ) the chain is on the cytoplasmic side. 2 positions are modified to phosphoserine: Ser329 and Ser331.

The protein belongs to the G-protein coupled receptor 1 family. As to quaternary structure, interacts with RPGRIP1L. Interacts with RACK1; the interaction regulates TBXA2R cell surface expression.

The protein localises to the cell membrane. In terms of biological role, receptor for thromboxane A2 (TXA2), a potent stimulator of platelet aggregation. The activity of this receptor is mediated by a G-protein that activates a phosphatidylinositol-calcium second messenger system. In the kidney, the binding of TXA2 to glomerular TP receptors causes intense vasoconstriction. Activates phospholipase C and adenylyl cyclase. This chain is Thromboxane A2 receptor (TBXA2R), found in Chlorocebus aethiops (Green monkey).